The sequence spans 260 residues: Transcriptional activator protein AsaR (260 aa).

Residues 176 to 241 (EDDPQEALTD…QAIAKGVSSG (66 aa)) enclose the HTH luxR-type domain. The segment at residues 200–219 (SGEIACILGITERTVNYHLN) is a DNA-binding region (H-T-H motif).

It belongs to the autoinducer-regulated transcriptional regulatory protein family.

Its function is as follows. Functions as a BHL-responsive transcriptional regulator. This Aeromonas salmonicida protein is Transcriptional activator protein AsaR.